The primary structure comprises 330 residues: Lipoyl synthase (330 aa).

[4Fe-4S] cluster contacts are provided by C55, C60, C66, C81, C85, C88, and S292. In terms of domain architecture, Radical SAM core spans 67–281; that stretch reads WEDREATFLI…AEEAREIGFV (215 aa).

Belongs to the radical SAM superfamily. Lipoyl synthase family. [4Fe-4S] cluster is required as a cofactor.

It localises to the cytoplasm. It carries out the reaction [[Fe-S] cluster scaffold protein carrying a second [4Fe-4S](2+) cluster] + N(6)-octanoyl-L-lysyl-[protein] + 2 oxidized [2Fe-2S]-[ferredoxin] + 2 S-adenosyl-L-methionine + 4 H(+) = [[Fe-S] cluster scaffold protein] + N(6)-[(R)-dihydrolipoyl]-L-lysyl-[protein] + 4 Fe(3+) + 2 hydrogen sulfide + 2 5'-deoxyadenosine + 2 L-methionine + 2 reduced [2Fe-2S]-[ferredoxin]. The protein operates within protein modification; protein lipoylation via endogenous pathway; protein N(6)-(lipoyl)lysine from octanoyl-[acyl-carrier-protein]: step 2/2. Catalyzes the radical-mediated insertion of two sulfur atoms into the C-6 and C-8 positions of the octanoyl moiety bound to the lipoyl domains of lipoate-dependent enzymes, thereby converting the octanoylated domains into lipoylated derivatives. This is Lipoyl synthase from Cutibacterium acnes (strain DSM 16379 / KPA171202) (Propionibacterium acnes).